Consider the following 265-residue polypeptide: MDVQDHTLDQGPQDKDKDLEEEVTVHLTADGDQVVQDPSGEGPFAENIQYQFRTDSNGQSQVTYRVVQVGDNETNPQAVVTTFPQGHQALTQVIQGSFNGESPTSESQGGETRFTYFPASAAIPGDGAGPASGGEQQPGITQPSGAAGGQFYVMMSPQDVLQGASQRTIAPRTHQFNTKIDNSRTVRDERRRATHNEVERRRRDKINNWIVKLSKIIPDCNIDHSKQGQSKGGILTKTCDYIHDLRNSNTRMAKASRIRKGSPST.

Basic and acidic residues predominate over residues 1-18; it reads MDVQDHTLDQGPQDKDKD. Disordered regions lie at residues 1-21 and 119-149; these read MDVQDHTLDQGPQDKDKDLEE and ASAAIPGDGAGPASGGEQQPGITQPSGAAGG. A compositionally biased stretch (polar residues) spans 134-144; the sequence is GEQQPGITQPS. One can recognise a bHLH domain in the interval 190–245; the sequence is RRRATHNEVERRRRDKINNWIVKLSKIIPDCNIDHSKQGQSKGGILTKTCDYIHDL.

As to quaternary structure, efficient DNA binding requires dimerization with another bHLH protein. Binds DNA as a homodimer or a heterodimer. In terms of tissue distribution, enriched in ectodermal tissue.

The protein localises to the nucleus. In terms of biological role, may act as a transcription factor which recognizes the CACGTG motif on SPEC gene promoters. This Strongylocentrotus purpuratus (Purple sea urchin) protein is Upstream stimulatory factor.